The primary structure comprises 64 residues: Antimicrobial peptide 1 (64 aa).

An N-terminal signal peptide occupies residues 1 to 26 (MAKVSSSLLKFAIVLILVLSMSAIIS). 3 disulfide bridges follow: Cys29-Cys46, Cys36-Cys50, and Cys45-Cys61.

It belongs to the AMP family.

The protein resides in the secreted. Its function is as follows. Possesses antifungal and antibacterial activity. The polypeptide is Antimicrobial peptide 1 (Mesembryanthemum crystallinum (Common ice plant)).